The chain runs to 470 residues: tRNA modification GTPase MnmE (470 aa).

(6S)-5-formyl-5,6,7,8-tetrahydrofolate-binding residues include K27, E90, and R129. The TrmE-type G domain occupies G231–L391. Residues N241 to S246, T260 to T266, and D285 to G288 each bind GTP. Residues S245 and T266 each contribute to the Mg(2+) site. A (6S)-5-formyl-5,6,7,8-tetrahydrofolate-binding site is contributed by K470.

Belongs to the TRAFAC class TrmE-Era-EngA-EngB-Septin-like GTPase superfamily. TrmE GTPase family. In terms of assembly, homodimer. Heterotetramer of two MnmE and two MnmG subunits. K(+) serves as cofactor.

The protein localises to the cytoplasm. In terms of biological role, exhibits a very high intrinsic GTPase hydrolysis rate. Involved in the addition of a carboxymethylaminomethyl (cmnm) group at the wobble position (U34) of certain tRNAs, forming tRNA-cmnm(5)s(2)U34. The protein is tRNA modification GTPase MnmE of Syntrophobacter fumaroxidans (strain DSM 10017 / MPOB).